The chain runs to 87 residues: U24 protein (87 aa).

Thr6 is subject to Phosphothreonine. The short motif at 8–11 is the PPXY motif element; sequence PPSY. Residues 59-79 form a helical membrane-spanning segment; it reads FLVLTGLAIAMILFIVFVLYV.

Interacts with host ITCH; this interaction probably mediates ITCH degradation. Interacts probably with NEDD4.

The protein resides in the membrane. Its function is as follows. Down-regulates the TCR/CD3E complex and the transferrin receptor TFRC in host T-cells by blocking them from recycling back to the cell surface. This chain is U24 protein (U24), found in Homo sapiens (Human).